A 355-amino-acid chain; its full sequence is WD repeat domain phosphoinositide-interacting protein 4 (355 aa).

WD repeat units follow at residues 2–40 and 185–225; these read SQQR…EKGH and AHQS…QLVE. A L/FRRG motif motif is present at residues 226-229; the sequence is LRRG. The WD 3 repeat unit spans residues 230–269; the sequence is TDPATLYCINFSHDSSFLCSSSDKGTVHIFALKDTKLNRR.

Belongs to the WD repeat PROPPIN family.

It localises to the preautophagosomal structure. Functionally, component of the autophagy machinery that controls the major intracellular degradation process by which cytoplasmic materials are packaged into autophagosomes and delivered to lysosomes for degradation. Binds phosphatidylinositol 3-phosphate (PtdIns3P). This chain is WD repeat domain phosphoinositide-interacting protein 4 (wdr45), found in Xenopus laevis (African clawed frog).